A 196-amino-acid polypeptide reads, in one-letter code: Glycerol-3-phosphate acyltransferase (196 aa).

The next 4 helical transmembrane spans lie at 4-24 (LTLLMILSAYLLGSISSAVVI), 80-100 (PFFLGLIAVAACLGHIFPLYF), 114-134 (AMFPVAWEMALLLIATWLLVF), and 155-175 (AYWIKPQYTVPVIMISLLILW).

This sequence belongs to the PlsY family. Probably interacts with PlsX.

The protein resides in the cell inner membrane. It catalyses the reaction an acyl phosphate + sn-glycerol 3-phosphate = a 1-acyl-sn-glycero-3-phosphate + phosphate. The protein operates within lipid metabolism; phospholipid metabolism. Its function is as follows. Catalyzes the transfer of an acyl group from acyl-phosphate (acyl-PO(4)) to glycerol-3-phosphate (G3P) to form lysophosphatidic acid (LPA). This enzyme utilizes acyl-phosphate as fatty acyl donor, but not acyl-CoA or acyl-ACP. The polypeptide is Glycerol-3-phosphate acyltransferase (Idiomarina loihiensis (strain ATCC BAA-735 / DSM 15497 / L2-TR)).